Consider the following 593-residue polypeptide: MRDSTGAGNSLVHKRSPLRRNQKTPTSLTKLSLQDGHKAKKPACKFEEGQDVLARWSDGLFYLGTIKKINILKQSCFIIFEDSSKSWVLWKDIQTGATGSGEMVCTICQEEYSEAPNEMVICDKCGQGYHQLCHTPHIDSSVIDSDEKWLCRQCVFATTTKRGGALKKGPNAKALQVMKQTLPYSVADLEWDAGHKTNVQQCYCYCGGPGDWYLKMLQCCKCKQWFHEACVQCLQKPMLFGDRFYTFICSVCSSGPEYLKRLPLQWVDIAHLCLYNLSVIHKKKYFDSELELMTYINENWDRLHPGELADTPKSERYEHVLEALNDYKTMFMSGKEIKKKKHLFGLRIRVPPVPPNVAFKAEKEPEGTSHEFKIKGRKASKPISDSREVSNGIEKKGKKKSVGRPPGPYTRKMIQKTAEPLLDKESISENPTLDLPCSIGRTEGTAHSSNTSDVDFTGASSAKETTSSSISRHYGLSDSRKRTRTGRSWPAAIPHLRRRRGRLPRRALQTQNSEIVKDDEGKEDYQFDELNTEILNNLADQELQLNHLKNSITSYFGAAGRIACGEKYRVLARRVTLDGKVQYLVEWEGATAS.

The disordered stretch occupies residues 1–35 (MRDSTGAGNSLVHKRSPLRRNQKTPTSLTKLSLQD). A compositionally biased stretch (basic residues) spans 12–22 (VHKRSPLRRNQ). Residues 23-32 (KTPTSLTKLS) show a composition bias toward polar residues. At Thr-24 the chain carries Phosphothreonine. Residues 44–101 (CKFEEGQDVLARWSDGLFYLGTIKKINILKQSCFIIFEDSSKSWVLWKDIQTGATGSG) form the Tudor domain. 2 consecutive PHD-type zinc fingers follow at residues 102–157 (EMVC…CVFA) and 201–255 (QCYC…CSSG). A Glycyl lysine isopeptide (Lys-Gly) (interchain with G-Cter in SUMO2) cross-link involves residue Lys-360. A compositionally biased stretch (basic and acidic residues) spans 360 to 374 (KAEKEPEGTSHEFKI). Disordered regions lie at residues 360–411 (KAEK…PYTR) and 424–486 (KESI…TRTG). Residues 445–454 (TAHSSNTSDV) are compositionally biased toward polar residues. The residue at position 452 (Ser-452) is a Phosphoserine. A compositionally biased stretch (low complexity) spans 459 to 471 (ASSAKETTSSSIS). A Glycyl lysine isopeptide (Lys-Gly) (interchain with G-Cter in SUMO2) cross-link involves residue Lys-522.

The protein belongs to the Polycomblike family. In terms of assembly, associates with the PRC2 complex, which consists of the core components EED, EZH1 or EZH2, SUZ12, and RBBP4, and various combinations of accessory subunits including AEBP2, JARID2, PHF19, MTF2 and EPOP. Forms a dimeric PRC2.1 (class 1, PRC-PCL) complex consisting of at least SUZ12, RBBP4, and PHF19 or MTF2; PHF19 and MTF2 stabilize the dimeric structure which enhances PRC2 interaction with chromatin.

It is found in the nucleus. Polycomb group (PcG) protein that specifically binds histone H3 trimethylated at 'Lys-36' (H3K36me3) and recruits the PRC2 complex, thus enhancing PRC2 H3K27me3 methylation activity. Regulates the transcriptional networks during embryonic stem cell self-renewal and differentiation. Promotes recruitment of the PRC2 complex to the inactive X chromosome in differentiating XX ES cells and PRC2 recruitment to target genes in undifferentiated ES cells. Required to repress Hox genes by enhancing H3K27me3 methylation of the PRC2 complex. In some conditions may act as an inhibitor of PRC2 activity: able to activate the CDKN2A gene and promote cellular senescence by suppressing the catalytic activity of the PRC2 complex locally. Binds to the metal-regulating-element (MRE) of MT1A gene promoter. The chain is Metal-response element-binding transcription factor 2 (MTF2) from Homo sapiens (Human).